A 287-amino-acid polypeptide reads, in one-letter code: Ribonuclease HII (287 aa).

The 227-residue stretch at 61–287 (ALQIGVDEAG…FAPVRKALES (227 aa)) folds into the RNase H type-2 domain. Residues D67, E68, and D186 each contribute to the a divalent metal cation site.

The protein belongs to the RNase HII family. Requires Mn(2+) as cofactor. The cofactor is Mg(2+).

The protein localises to the cytoplasm. It catalyses the reaction Endonucleolytic cleavage to 5'-phosphomonoester.. Its function is as follows. Endonuclease that specifically degrades the RNA of RNA-DNA hybrids. This Psychrobacter arcticus (strain DSM 17307 / VKM B-2377 / 273-4) protein is Ribonuclease HII.